The following is a 502-amino-acid chain: 4-hydroxy-3-methylbut-2-enyl diphosphate reductase, chloroplastic (502 aa).

Residues M1–V48 constitute a chloroplast transit peptide. Residue C140 coordinates [4Fe-4S] cluster. Residue H170 coordinates (2E)-4-hydroxy-3-methylbut-2-enyl diphosphate. Residue C232 participates in [4Fe-4S] cluster binding. H260 lines the (2E)-4-hydroxy-3-methylbut-2-enyl diphosphate pocket. Catalysis depends on E262, which acts as the Proton donor. Residue T325 participates in (2E)-4-hydroxy-3-methylbut-2-enyl diphosphate binding. Position 363 (C363) interacts with [4Fe-4S] cluster. (2E)-4-hydroxy-3-methylbut-2-enyl diphosphate is bound by residues S398–N400 and S461.

Belongs to the IspH family. In terms of assembly, homodimer. Requires [4Fe-4S] cluster as cofactor.

Its subcellular location is the plastid. The protein resides in the chloroplast stroma. The enzyme catalyses dimethylallyl diphosphate + 2 oxidized [2Fe-2S]-[ferredoxin] + H2O = (2E)-4-hydroxy-3-methylbut-2-enyl diphosphate + 2 reduced [2Fe-2S]-[ferredoxin] + 2 H(+). The catalysed reaction is isopentenyl diphosphate + 2 oxidized [2Fe-2S]-[ferredoxin] + H2O = (2E)-4-hydroxy-3-methylbut-2-enyl diphosphate + 2 reduced [2Fe-2S]-[ferredoxin] + 2 H(+). It participates in isoprenoid biosynthesis; dimethylallyl diphosphate biosynthesis; dimethylallyl diphosphate from (2E)-4-hydroxy-3-methylbutenyl diphosphate: step 1/1. Its pathway is isoprenoid biosynthesis; isopentenyl diphosphate biosynthesis via DXP pathway; isopentenyl diphosphate from 1-deoxy-D-xylulose 5-phosphate: step 6/6. Enzyme of the plastid non-mevalonate pathway for isoprenoid biosynthesis that converts 1-hydroxy-2-methyl-2-(E)-butenyl 4-diphosphate into isopentenyl diphosphate (IPP) and dimethylallyl diphosphate (DMAPP). In Botryococcus braunii (Green alga), this protein is 4-hydroxy-3-methylbut-2-enyl diphosphate reductase, chloroplastic.